The chain runs to 95 residues: Acylphosphatase (95 aa).

The Acylphosphatase-like domain occupies 6–94; that stretch reads RVRVIVKGIV…EDFTGFSVRY (89 aa). Residues Arg21 and Asn39 contribute to the active site.

The protein belongs to the acylphosphatase family.

The enzyme catalyses an acyl phosphate + H2O = a carboxylate + phosphate + H(+). In Caldivirga maquilingensis (strain ATCC 700844 / DSM 13496 / JCM 10307 / IC-167), this protein is Acylphosphatase (acyP).